A 77-amino-acid polypeptide reads, in one-letter code: Acyl carrier protein (77 aa).

Residues 1–76 (MAVFDEVKDV…DVVNYIDGLK (76 aa)) enclose the Carrier domain. Position 36 is an O-(pantetheine 4'-phosphoryl)serine (S36).

The protein belongs to the acyl carrier protein (ACP) family. 4'-phosphopantetheine is transferred from CoA to a specific serine of apo-ACP by AcpS. This modification is essential for activity because fatty acids are bound in thioester linkage to the sulfhydryl of the prosthetic group.

The protein localises to the cytoplasm. The protein operates within lipid metabolism; fatty acid biosynthesis. Carrier of the growing fatty acid chain in fatty acid biosynthesis. The polypeptide is Acyl carrier protein (Campylobacter fetus subsp. fetus (strain 82-40)).